A 396-amino-acid chain; its full sequence is Elongation factor Tu (396 aa).

The tr-type G domain occupies 10–206 (KPHVNIGTIG…AVDEYIPTPQ (197 aa)). Residues 19–26 (GHVDHGKT) form a G1 region. Residue 19-26 (GHVDHGKT) coordinates GTP. Position 26 (Thr26) interacts with Mg(2+). The segment at 60–64 (GITIS) is G2. Positions 81-84 (DCPG) are G3. Residues 81-85 (DCPGH) and 136-139 (NKVD) contribute to the GTP site. Residues 136–139 (NKVD) are G4. Residues 174-176 (SAL) form a G5 region.

This sequence belongs to the TRAFAC class translation factor GTPase superfamily. Classic translation factor GTPase family. EF-Tu/EF-1A subfamily. As to quaternary structure, monomer.

Its subcellular location is the cytoplasm. It carries out the reaction GTP + H2O = GDP + phosphate + H(+). GTP hydrolase that promotes the GTP-dependent binding of aminoacyl-tRNA to the A-site of ribosomes during protein biosynthesis. The chain is Elongation factor Tu from Stigmatella aurantiaca.